A 315-amino-acid chain; its full sequence is Acetyl-coenzyme A carboxylase carboxyl transferase subunit alpha (315 aa).

The CoA carboxyltransferase C-terminal domain occupies L36–I289.

Belongs to the AccA family. In terms of assembly, acetyl-CoA carboxylase is a heterohexamer composed of biotin carboxyl carrier protein (AccB), biotin carboxylase (AccC) and two subunits each of ACCase subunit alpha (AccA) and ACCase subunit beta (AccD).

It localises to the cytoplasm. The catalysed reaction is N(6)-carboxybiotinyl-L-lysyl-[protein] + acetyl-CoA = N(6)-biotinyl-L-lysyl-[protein] + malonyl-CoA. The protein operates within lipid metabolism; malonyl-CoA biosynthesis; malonyl-CoA from acetyl-CoA: step 1/1. Functionally, component of the acetyl coenzyme A carboxylase (ACC) complex. First, biotin carboxylase catalyzes the carboxylation of biotin on its carrier protein (BCCP) and then the CO(2) group is transferred by the carboxyltransferase to acetyl-CoA to form malonyl-CoA. This is Acetyl-coenzyme A carboxylase carboxyl transferase subunit alpha from Francisella tularensis subsp. tularensis (strain FSC 198).